Here is a 771-residue protein sequence, read N- to C-terminus: Tubulin monoglycylase TTLL3 (771 aa).

The interval 70 to 106 (PRPSFSQPRRHDHETETTDEGDSSDEDDLGEEVERDD) is disordered. The span at 86–106 (TTDEGDSSDEDDLGEEVERDD) shows a compositional bias: acidic residues. The 347-residue stretch at 220–566 (EGEKMGEVHN…RRSERNTDTG (347 aa)) folds into the TTL domain. ATP is bound by residues Lys339, 345–346 (RG), 377–380 (QKYI), 390–392 (KFD), and 434–435 (CN). Arg345 lines the a protein pocket. Residue Ser437 participates in L-glutamate binding. Asp512, Glu525, and Asn527 together coordinate Mg(2+). Glu525 contacts ATP. Disordered stretches follow at residues 605–640 (LIQS…EEVK) and 682–713 (TELH…PTLY). Polar residues predominate over residues 614–633 (SKSTNHKSSLLSSPCTSGKE).

Requires Mg(2+) as cofactor.

The protein resides in the cytoplasm. It is found in the cytoskeleton. Its subcellular location is the cell projection. The protein localises to the cilium. It localises to the cilium axoneme. The protein resides in the flagellum axoneme. It catalyses the reaction L-glutamyl-[protein] + glycine + ATP = glycyl-L-glutamyl-[protein] + ADP + phosphate + H(+). In terms of biological role, monoglycylase which modifies alpha- and beta-tubulin, adding a single glycine on the gamma-carboxyl groups of specific glutamate residues to generate monoglycine side chains within the C-terminal tail of tubulin. Not involved in elongation step of the polyglycylation reaction. Preferentially glycylates a beta-tail peptide over the alpha-tail, although shifts its preference toward alpha-tail as beta-tail glutamylation increases. Competes with polyglutamylases for modification site on beta-tubulin substrate, thereby creating an anticorrelation between glycylation and glutamylation reactions. Not involved in elongation step of the polyglycylation reaction. This Danio rerio (Zebrafish) protein is Tubulin monoglycylase TTLL3 (ttll3).